The following is a 707-amino-acid chain: Potassium-transporting ATPase ATP-binding subunit (707 aa).

The span at M1–A11 shows a compositional bias: basic and acidic residues. A disordered region spans residues M1–G37. 4 helical membrane-spanning segments follow: residues V61 to F81, W89 to E109, I238 to L258, and M271 to S291. Catalysis depends on D326, which acts as the 4-aspartylphosphate intermediate. Residues D363, E367, F397–S404, and K415 each bind ATP. Mg(2+) is bound by residues D542 and D546. Transmembrane regions (helical) follow at residues F612–M632, A640–L660, and L683–I703.

The protein belongs to the cation transport ATPase (P-type) (TC 3.A.3) family. Type IA subfamily. As to quaternary structure, the system is composed of three essential subunits: KdpA, KdpB and KdpC.

The protein localises to the cell membrane. The catalysed reaction is K(+)(out) + ATP + H2O = K(+)(in) + ADP + phosphate + H(+). Its function is as follows. Part of the high-affinity ATP-driven potassium transport (or Kdp) system, which catalyzes the hydrolysis of ATP coupled with the electrogenic transport of potassium into the cytoplasm. This subunit is responsible for energy coupling to the transport system and for the release of the potassium ions to the cytoplasm. This is Potassium-transporting ATPase ATP-binding subunit from Streptomyces coelicolor (strain ATCC BAA-471 / A3(2) / M145).